Reading from the N-terminus, the 155-residue chain is Photosystem II extrinsic protein V (155 aa).

The signal sequence occupies residues 1 to 20 (MFVKMIGWLVLFLFAHQTWA). Heme c is bound by residues Cys50, Cys53, His54, and His105.

Belongs to the cytochrome c family. PsbV subfamily. In terms of assembly, PSII is composed of 1 copy each of membrane proteins PsbA, PsbB, PsbC, PsbD, PsbE, PsbF, PsbH, PsbI, PsbJ, PsbK, PsbL, PsbM, PsbT, PsbY, PsbZ, Psb30/Ycf12, at least 3 peripheral proteins of the oxygen-evolving complex and a large number of cofactors. It forms dimeric complexes. The extrinsic subunits in red algae are PsbO (OEC33), PsbQ', cytochrome c-550 and PsbU. Requires heme c as cofactor.

The protein localises to the plastid. It localises to the chloroplast thylakoid membrane. In terms of biological role, one of the extrinsic, lumenal subunits of photosystem II (PSII). PSII is a light-driven water plastoquinone oxidoreductase, using light energy to abstract electrons from H(2)O, generating a proton gradient subsequently used for ATP formation. The extrinsic proteins stabilize the structure of photosystem II oxygen-evolving complex (OEC), the ion environment of oxygen evolution and protect the OEC against heat-induced inactivation. Unlike the T.vulcanus ortholog, it does not bind by itself to PSII, but requires all extrinsic members of the OEC. The sequence is that of Photosystem II extrinsic protein V from Cyanidium caldarium (Red alga).